Consider the following 239-residue polypeptide: Protein GrpE (239 aa).

2 disordered regions span residues 1-60 (MIEN…SNND) and 208-239 (SMGP…SEDV). Over residues 28 to 42 (SMQNSTTENDELSSQ) the composition is skewed to polar residues. 2 stretches are compositionally biased toward basic and acidic residues: residues 43 to 53 (KTEEINTEELK) and 216 to 225 (SQQEVEKDTV). Positions 226–239 (EGDVDSDANTSEDV) are enriched in acidic residues.

The protein belongs to the GrpE family. In terms of assembly, homodimer.

The protein resides in the cytoplasm. Participates actively in the response to hyperosmotic and heat shock by preventing the aggregation of stress-denatured proteins, in association with DnaK and GrpE. It is the nucleotide exchange factor for DnaK and may function as a thermosensor. Unfolded proteins bind initially to DnaJ; upon interaction with the DnaJ-bound protein, DnaK hydrolyzes its bound ATP, resulting in the formation of a stable complex. GrpE releases ADP from DnaK; ATP binding to DnaK triggers the release of the substrate protein, thus completing the reaction cycle. Several rounds of ATP-dependent interactions between DnaJ, DnaK and GrpE are required for fully efficient folding. The sequence is that of Protein GrpE from Prochlorococcus marinus (strain MIT 9301).